A 241-amino-acid polypeptide reads, in one-letter code: Large ribosomal subunit protein uL3 (241 aa).

Residues 140 to 168 (SHRSIGSTGGRQDPGKTFKNKKMPGHMGD) are disordered. Position 151 is an N5-methylglutamine (Gln-151).

It belongs to the universal ribosomal protein uL3 family. Part of the 50S ribosomal subunit. Forms a cluster with proteins L14 and L19. In terms of processing, methylated by PrmB.

One of the primary rRNA binding proteins, it binds directly near the 3'-end of the 23S rRNA, where it nucleates assembly of the 50S subunit. The chain is Large ribosomal subunit protein uL3 from Azorhizobium caulinodans (strain ATCC 43989 / DSM 5975 / JCM 20966 / LMG 6465 / NBRC 14845 / NCIMB 13405 / ORS 571).